A 208-amino-acid polypeptide reads, in one-letter code: Glycerol-3-phosphate acyltransferase (208 aa).

Transmembrane regions (helical) follow at residues 4-24 (LALS…AVLI), 56-76 (VAVL…GYFL), 80-100 (PFML…PIFF), 117-137 (PIGL…VVLF), and 139-159 (YSSL…WLIK).

This sequence belongs to the PlsY family. In terms of assembly, probably interacts with PlsX.

The protein resides in the cell inner membrane. The catalysed reaction is an acyl phosphate + sn-glycerol 3-phosphate = a 1-acyl-sn-glycero-3-phosphate + phosphate. The protein operates within lipid metabolism; phospholipid metabolism. Catalyzes the transfer of an acyl group from acyl-phosphate (acyl-PO(4)) to glycerol-3-phosphate (G3P) to form lysophosphatidic acid (LPA). This enzyme utilizes acyl-phosphate as fatty acyl donor, but not acyl-CoA or acyl-ACP. This chain is Glycerol-3-phosphate acyltransferase, found in Vibrio cholerae serotype O1 (strain ATCC 39541 / Classical Ogawa 395 / O395).